The following is a 185-amino-acid chain: Ribosome-recycling factor (185 aa).

A disordered region spans residues 145–164 (DGEAGEDEVSRAEKDLDKTT).

Belongs to the RRF family.

Its subcellular location is the cytoplasm. Functionally, responsible for the release of ribosomes from messenger RNA at the termination of protein biosynthesis. May increase the efficiency of translation by recycling ribosomes from one round of translation to another. The sequence is that of Ribosome-recycling factor from Mycobacterium sp. (strain JLS).